A 146-amino-acid chain; its full sequence is MATQPATESVQCFGRKKTAVAVTHCKRGSGLIKLNGCPIELFQPEILRFKIFEPVLLLGKHRFAGVNMRIRVNGGGHTSQVYAIRQSIAKALVAYYQKYVDEQSKKEIKDILVRYDRTLLVADPRRCEPKKFGGRGARSRYQKSYR.

Belongs to the universal ribosomal protein uS9 family.

Its subcellular location is the cytoplasm. This chain is Small ribosomal subunit protein uS9x (RPS16C), found in Arabidopsis thaliana (Mouse-ear cress).